Reading from the N-terminus, the 224-residue chain is uncharacterized protein (224 aa).

An N-terminal signal peptide occupies residues 1–17 (MFTILLYFLVLFWVTNA).

This is an uncharacterized protein from Caenorhabditis elegans.